The primary structure comprises 238 residues: Ribonuclease 3 (238 aa).

One can recognise an RNase III domain in the interval 9–141; it reads LIDFMEKIGY…VVAAVYIDGG (133 aa). Residue Glu54 coordinates Mg(2+). The active site involves Asp58. Mg(2+) is bound by residues Asp127 and Glu130. Glu130 is an active-site residue. Residues 168–237 form the DRBM domain; it reads DYKTSLQEIT…ARRAIEKLKG (70 aa).

This sequence belongs to the ribonuclease III family. In terms of assembly, homodimer. Mg(2+) serves as cofactor.

The protein localises to the cytoplasm. The enzyme catalyses Endonucleolytic cleavage to 5'-phosphomonoester.. Digests double-stranded RNA. Involved in the processing of primary rRNA transcript to yield the immediate precursors to the large and small rRNAs (23S and 16S). Processes some mRNAs, and tRNAs when they are encoded in the rRNA operon. Processes pre-crRNA and tracrRNA of type II CRISPR loci if present in the organism. This chain is Ribonuclease 3, found in Pseudothermotoga lettingae (strain ATCC BAA-301 / DSM 14385 / NBRC 107922 / TMO) (Thermotoga lettingae).